A 200-amino-acid chain; its full sequence is Probable molybdenum cofactor guanylyltransferase (200 aa).

Residues 9 to 11 (LAG), Lys21, Asp69, and Asp100 each bind GTP. Asp100 contacts Mg(2+).

Belongs to the MobA family. Requires Mg(2+) as cofactor.

Its subcellular location is the cytoplasm. It catalyses the reaction Mo-molybdopterin + GTP + H(+) = Mo-molybdopterin guanine dinucleotide + diphosphate. Functionally, transfers a GMP moiety from GTP to Mo-molybdopterin (Mo-MPT) cofactor (Moco or molybdenum cofactor) to form Mo-molybdopterin guanine dinucleotide (Mo-MGD) cofactor. The sequence is that of Probable molybdenum cofactor guanylyltransferase from Bacillus cereus (strain Q1).